Reading from the N-terminus, the 300-residue chain is 4-hydroxy-tetrahydrodipicolinate synthase (300 aa).

Position 57 (Thr-57) interacts with pyruvate. Tyr-145 (proton donor/acceptor) is an active-site residue. The active-site Schiff-base intermediate with substrate is the Lys-173. Ile-213 is a pyruvate binding site.

This sequence belongs to the DapA family. In terms of assembly, homotetramer; dimer of dimers.

Its subcellular location is the cytoplasm. The enzyme catalyses L-aspartate 4-semialdehyde + pyruvate = (2S,4S)-4-hydroxy-2,3,4,5-tetrahydrodipicolinate + H2O + H(+). It participates in amino-acid biosynthesis; L-lysine biosynthesis via DAP pathway; (S)-tetrahydrodipicolinate from L-aspartate: step 3/4. Its function is as follows. Catalyzes the condensation of (S)-aspartate-beta-semialdehyde [(S)-ASA] and pyruvate to 4-hydroxy-tetrahydrodipicolinate (HTPA). The sequence is that of 4-hydroxy-tetrahydrodipicolinate synthase from Corynebacterium jeikeium (strain K411).